Here is an 83-residue protein sequence, read N- to C-terminus: Sulfur carrier protein TusA (83 aa).

The active-site Cysteine persulfide intermediate is the Cys-20.

Belongs to the sulfur carrier protein TusA family.

The protein resides in the cytoplasm. In terms of biological role, sulfur carrier protein which probably makes part of a sulfur-relay system. This chain is Sulfur carrier protein TusA, found in Pseudomonas fluorescens (strain SBW25).